A 485-amino-acid polypeptide reads, in one-letter code: Adenosylhomocysteinase (485 aa).

Substrate contacts are provided by Thr64, Asp139, and Glu205. Residue Thr206 to Thr208 coordinates NAD(+). Lys235 and Asp239 together coordinate substrate. Residues Asn240, Gly269–Gly274, Glu292, Asn327, Ile348–His350, and Asn397 contribute to the NAD(+) site.

It belongs to the adenosylhomocysteinase family. The cofactor is NAD(+).

The catalysed reaction is S-adenosyl-L-homocysteine + H2O = L-homocysteine + adenosine. The protein operates within amino-acid biosynthesis; L-homocysteine biosynthesis; L-homocysteine from S-adenosyl-L-homocysteine: step 1/1. Functionally, adenosylhomocysteine is a competitive inhibitor of S-adenosyl-L-methionine-dependent methyl transferase reactions; therefore adenosylhomocysteinase may play a key role in the control of methylations via regulation of the intracellular concentration of adenosylhomocysteine. The sequence is that of Adenosylhomocysteinase (SAHH) from Solanum lycopersicum (Tomato).